Here is a 474-residue protein sequence, read N- to C-terminus: MSSFNPHLKFQSQAVAKPYFVFALILFVGQVLFGLIMGLQYVVGDFLFPLLPFNVARMVHTNLLIVWLLFGFMGAAYYLIPEESDCELHSPKLAIILFWVFAAAGVLTILGYLFVPYAALAEMTRNDLLPTMGREFLEQPTITKIGIVVVALGFLYNIGMTMLKGRKTVVSTVMMTGLIGLAVFFLFAFYNPENLSRDKFYWWFVVHLWVEGVWELIMGAMLAFVLIKVTGVDREVIEKWLYVIIAMALITGIIGTGHHFFWIGAPTVWLWVGSIFSALEPLPFFAMVLFALNMVNRRRREHPNKAASLWAIGTTVTAFLGAGVWGFMHTLAPVNYYTHGSQLTAAHGHLAFYGAYAMIVMTMISYAMPRLRGLGEAPDARAQRIEVWGFWLMTISMIAITLFLTAAGVVQIWLQRIPADGAAMSFMNTADQLAIFFWLRFIAGVFFLIGLVCYLYSFRQRGRVPVVVAAPAAA.

Residues 19–39 (YFVFALILFVGQVLFGLIMGL) form a helical membrane-spanning segment. Histidine 60 provides a ligand contact to heme b. Transmembrane regions (helical) follow at residues 61 to 81 (TNLLIVWLLFGFMGAAYYLIP), 95 to 115 (IILFWVFAAAGVLTILGYLFV), 145 to 165 (IGIVVVALGFLYNIGMTMLKG), 169 to 189 (VVSTVMMTGLIGLAVFFLFAF), 207 to 227 (HLWVEGVWELIMGAMLAFVLI), 243 to 263 (VIIAMALITGIIGTGHHFFWI), 270 to 290 (LWVGSIFSALEPLPFFAMVLF), and 308 to 328 (SLWAIGTTVTAFLGAGVWGFM). Fe cation is bound by residues histidine 207, histidine 258, and histidine 259. Heme b is bound by residues histidine 347 and histidine 349. Helical transmembrane passes span 348-368 (GHLAFYGAYAMIVMTMISYAM), 390-410 (FWLMTISMIAITLFLTAAGVV), and 433-453 (LAIFFWLRFIAGVFFLIGLVC).

This sequence belongs to the heme-copper respiratory oxidase family. In terms of assembly, heterodimer of cytochromes b (large subunit) and c (small subunit).

The protein localises to the cell membrane. It catalyses the reaction nitrous oxide + 2 Fe(III)-[cytochrome c] + H2O = 2 nitric oxide + 2 Fe(II)-[cytochrome c] + 2 H(+). The protein operates within nitrogen metabolism; nitrate reduction (denitrification); dinitrogen from nitrate: step 3/4. Functionally, component of the anaerobic respiratory chain that transforms nitrate to dinitrogen (denitrification). NorB is the catalytic subunit of the enzyme complex. Shows proton pump activity across the membrane in denitrifying bacterial cells. The mononitrogen reduction is probably coupled to electron transport phosphorylation. This is Nitric oxide reductase subunit B (norB) from Stutzerimonas stutzeri (Pseudomonas stutzeri).